The primary structure comprises 149 residues: Peptide deformylase (149 aa).

Fe cation contacts are provided by C92 and H134. E135 is a catalytic residue. A Fe cation-binding site is contributed by H138.

Belongs to the polypeptide deformylase family. Fe(2+) is required as a cofactor.

It carries out the reaction N-terminal N-formyl-L-methionyl-[peptide] + H2O = N-terminal L-methionyl-[peptide] + formate. Removes the formyl group from the N-terminal Met of newly synthesized proteins. Requires at least a dipeptide for an efficient rate of reaction. N-terminal L-methionine is a prerequisite for activity but the enzyme has broad specificity at other positions. The protein is Peptide deformylase of Buchnera aphidicola subsp. Cinara cedri (strain Cc).